The following is a 103-amino-acid chain: Stefin-3 (103 aa).

The Secondary area of contact motif lies at 52–56 (QVVAG).

Belongs to the cystatin family.

Its subcellular location is the cytoplasm. Its function is as follows. This is an intracellular thiol proteinase inhibitor. This chain is Stefin-3 (Stfa3), found in Mus musculus (Mouse).